We begin with the raw amino-acid sequence, 318 residues long: Sol locus transcriptional repressor (318 aa).

TPR repeat units lie at residues 65-98, 99-132, 133-166, and 167-199; these read ANAYITRERIYFYSRDFELSLRDLLQAIKLRPKT, INDVYSFALSYHILGEPERALKYFLRAVELQPNV, GISYENLAWFYYLTGKYDKAIENFEKAISMGSTN, and SVYRSLGITYAKIGDYKKSEEYLKKALDAEPEK.

Its function is as follows. Transcriptional repressor of the sol locus (adhE/aad, ctfA, ctfB and adc) genes for butanol and acetone formation. The protein is Sol locus transcriptional repressor (solR) of Clostridium acetobutylicum (strain ATCC 824 / DSM 792 / JCM 1419 / IAM 19013 / LMG 5710 / NBRC 13948 / NRRL B-527 / VKM B-1787 / 2291 / W).